The primary structure comprises 294 residues: UPF0761 membrane protein YPK_4186 (294 aa).

7 helical membrane-spanning segments follow: residues 44-64 (LLSL…FPMF), 67-87 (ISIK…GDII), 108-128 (GLIV…NIIW), 136-156 (LVFS…LVGA), 185-205 (VFPL…VPTV), 212-232 (ALIG…GFAM), and 246-266 (VLAV…IVLL).

This sequence belongs to the UPF0761 family.

Its subcellular location is the cell inner membrane. The chain is UPF0761 membrane protein YPK_4186 from Yersinia pseudotuberculosis serotype O:3 (strain YPIII).